The sequence spans 85 residues: Large ribosomal subunit protein bL27 (85 aa).

The disordered stretch occupies residues 1 to 21 (MAHKKAAGSTKNGRDSNAKRL).

The protein belongs to the bacterial ribosomal protein bL27 family.

The sequence is that of Large ribosomal subunit protein bL27 from Hydrogenovibrio crunogenus (strain DSM 25203 / XCL-2) (Thiomicrospira crunogena).